The following is a 303-amino-acid chain: Deoxyhypusine hydroxylase (303 aa).

At methionine 1 the chain carries N-acetylmethionine. HEAT-like PBS-type repeat units follow at residues 23–49, 54–80, 87–113, 175–201, 206–232, and 239–265; these read ARFRALFTLRGLGGPVAISWISRAFDD, LKHELAYCLGQMQDRRAIPVLLDVLRD, VRHEAGEALGAIGDPEVLEILKQYSTD, DRYRAMFALRDAGGKEAALALAEGLRC, FRHEIGYVLGQMQHEAAVPQLAAALAQ, and VRHECAEALGAIARPACLAALRAHVAD. Histidine 56, histidine 89, and glutamate 90 together coordinate Fe cation. Residues histidine 208, histidine 241, and glutamate 242 each contribute to the Fe cation site.

The protein belongs to the deoxyhypusine hydroxylase family. It depends on Fe(2+) as a cofactor.

The enzyme catalyses [eIF5A protein]-deoxyhypusine + AH2 + O2 = [eIF5A protein]-hypusine + A + H2O. It functions in the pathway protein modification; eIF5A hypusination. Its function is as follows. Catalyzes the hydroxylation of the N(6)-(4-aminobutyl)-L-lysine intermediate produced by deoxyhypusine synthase/DHPS on a critical lysine of the eukaryotic translation initiation factor 5A/eIF-5A. This is the second step of the post-translational modification of that lysine into an unusual amino acid residue named hypusine. Hypusination is unique to mature eIF-5A factor and is essential for its function. The sequence is that of Deoxyhypusine hydroxylase from Bos taurus (Bovine).